Reading from the N-terminus, the 107-residue chain is Toluene 1,2-dioxygenase system ferredoxin subunit (107 aa).

One can recognise a Rieske domain in the interval 4–99; it reads TYILRQGDLP…IKVEGDEVHV (96 aa). Residues Cys-43, His-45, Cys-62, and His-65 each coordinate [2Fe-2S] cluster.

This sequence belongs to the bacterial ring-hydroxylating dioxygenase ferredoxin component family. In terms of assembly, this dioxygenase system consists of four proteins: the two subunits of the hydroxylase component (todC1 and todC2), a ferredoxin (TodB) and a ferredoxin reductase (TodA).

It participates in xenobiotic degradation; toluene degradation. This protein seems to be a 2Fe-2S ferredoxin. The chain is Toluene 1,2-dioxygenase system ferredoxin subunit (todB) from Pseudomonas putida (strain ATCC 700007 / DSM 6899 / JCM 31910 / BCRC 17059 / LMG 24140 / F1).